The chain runs to 194 residues: Peptidyl-tRNA hydrolase (194 aa).

Y17 contacts tRNA. H22 acts as the Proton acceptor in catalysis. 3 residues coordinate tRNA: Y68, N70, and N116.

Belongs to the PTH family. As to quaternary structure, monomer.

The protein localises to the cytoplasm. The enzyme catalyses an N-acyl-L-alpha-aminoacyl-tRNA + H2O = an N-acyl-L-amino acid + a tRNA + H(+). Functionally, hydrolyzes ribosome-free peptidyl-tRNAs (with 1 or more amino acids incorporated), which drop off the ribosome during protein synthesis, or as a result of ribosome stalling. Catalyzes the release of premature peptidyl moieties from peptidyl-tRNA molecules trapped in stalled 50S ribosomal subunits, and thus maintains levels of free tRNAs and 50S ribosomes. This Pseudomonas putida (strain GB-1) protein is Peptidyl-tRNA hydrolase.